A 190-amino-acid chain; its full sequence is Molybdenum cofactor guanylyltransferase (190 aa).

Residues 10-12, K23, N51, D69, and D99 each bind GTP; that span reads LAG. Mg(2+) is bound at residue D99.

The protein belongs to the MobA family. As to quaternary structure, monomer. Mg(2+) is required as a cofactor.

It is found in the cytoplasm. The catalysed reaction is Mo-molybdopterin + GTP + H(+) = Mo-molybdopterin guanine dinucleotide + diphosphate. In terms of biological role, transfers a GMP moiety from GTP to Mo-molybdopterin (Mo-MPT) cofactor (Moco or molybdenum cofactor) to form Mo-molybdopterin guanine dinucleotide (Mo-MGD) cofactor. This chain is Molybdenum cofactor guanylyltransferase, found in Mannheimia succiniciproducens (strain KCTC 0769BP / MBEL55E).